The following is a 224-amino-acid chain: Lipoprotein-releasing system ATP-binding protein LolD (224 aa).

In terms of domain architecture, ABC transporter spans 5-224 (LEILDVSKCY…SLSGGMLTEL (220 aa)). 40–47 (GSSGSGKS) serves as a coordination point for ATP.

The protein belongs to the ABC transporter superfamily. Lipoprotein translocase (TC 3.A.1.125) family. In terms of assembly, the complex is composed of two ATP-binding proteins (LolD) and two transmembrane proteins (LolC and LolE).

The protein resides in the cell inner membrane. Its function is as follows. Part of the ABC transporter complex LolCDE involved in the translocation of mature outer membrane-directed lipoproteins, from the inner membrane to the periplasmic chaperone, LolA. Responsible for the formation of the LolA-lipoprotein complex in an ATP-dependent manner. This chain is Lipoprotein-releasing system ATP-binding protein LolD, found in Anaplasma marginale (strain St. Maries).